A 336-amino-acid polypeptide reads, in one-letter code: Dihydroorotate dehydrogenase (quinone) (336 aa).

FMN is bound by residues 62–66 (AGLDK) and Thr-86. Position 66 (Lys-66) interacts with substrate. 111–115 (NRMGF) contacts substrate. FMN contacts are provided by Asn-139 and Asn-172. Substrate is bound at residue Asn-172. Catalysis depends on Ser-175, which acts as the Nucleophile. Residue Asn-177 coordinates substrate. Positions 217 and 245 each coordinate FMN. A substrate-binding site is contributed by 246–247 (NT). FMN contacts are provided by residues Gly-268, Gly-297, and 318 to 319 (YS).

This sequence belongs to the dihydroorotate dehydrogenase family. Type 2 subfamily. As to quaternary structure, monomer. Requires FMN as cofactor.

It is found in the cell membrane. It carries out the reaction (S)-dihydroorotate + a quinone = orotate + a quinol. The protein operates within pyrimidine metabolism; UMP biosynthesis via de novo pathway; orotate from (S)-dihydroorotate (quinone route): step 1/1. Functionally, catalyzes the conversion of dihydroorotate to orotate with quinone as electron acceptor. The sequence is that of Dihydroorotate dehydrogenase (quinone) from Aeromonas hydrophila subsp. hydrophila (strain ATCC 7966 / DSM 30187 / BCRC 13018 / CCUG 14551 / JCM 1027 / KCTC 2358 / NCIMB 9240 / NCTC 8049).